Here is a 264-residue protein sequence, read N- to C-terminus: Dehydrodolichyl diphosphate synthase complex subunit SPAC4D7.04c (264 aa).

The protein belongs to the UPP synthase family. As to quaternary structure, forms an active dehydrodolichyl diphosphate synthase complex with nus1. Mg(2+) is required as a cofactor.

It localises to the endoplasmic reticulum membrane. It carries out the reaction n isopentenyl diphosphate + (2E,6E)-farnesyl diphosphate = a di-trans,poly-cis-polyprenyl diphosphate + n diphosphate. It functions in the pathway protein modification; protein glycosylation. With nus1, forms the dehydrodolichyl diphosphate synthase (DDS) complex, an essential component of the dolichol monophosphate (Dol-P) biosynthetic machinery. Adds multiple copies of isopentenyl pyrophosphate (IPP) to farnesyl pyrophosphate (FPP) to produce dehydrodolichyl diphosphate (Dedol-PP), a precursor of dolichol which is utilized as a sugar carrier in protein glycosylation in the endoplasmic reticulum (ER). This Schizosaccharomyces pombe (strain 972 / ATCC 24843) (Fission yeast) protein is Dehydrodolichyl diphosphate synthase complex subunit SPAC4D7.04c.